The following is a 432-amino-acid chain: Proline--tRNA ligase (432 aa).

The protein belongs to the class-II aminoacyl-tRNA synthetase family. ProS type 2 subfamily. In terms of assembly, homodimer.

Its subcellular location is the cytoplasm. The catalysed reaction is tRNA(Pro) + L-proline + ATP = L-prolyl-tRNA(Pro) + AMP + diphosphate. In terms of biological role, catalyzes the attachment of proline to tRNA(Pro) in a two-step reaction: proline is first activated by ATP to form Pro-AMP and then transferred to the acceptor end of tRNA(Pro). The protein is Proline--tRNA ligase of Rickettsia bellii (strain OSU 85-389).